The following is a 127-amino-acid chain: Protein translocase subunit SecE (127 aa).

The next 3 helical transmembrane spans lie at 16-36 (IAKW…NHYY), 42-62 (IFQN…IFLT), and 98-118 (IIVT…LIWF).

This sequence belongs to the SecE/SEC61-gamma family. In terms of assembly, component of the Sec protein translocase complex. Heterotrimer consisting of SecY, SecE and SecG subunits. The heterotrimers can form oligomers, although 1 heterotrimer is thought to be able to translocate proteins. Interacts with the ribosome. Interacts with SecDF, and other proteins may be involved. Interacts with SecA.

The protein localises to the cell membrane. Essential subunit of the Sec protein translocation channel SecYEG. Clamps together the 2 halves of SecY. May contact the channel plug during translocation. This chain is Protein translocase subunit SecE, found in Buchnera aphidicola subsp. Baizongia pistaciae (strain Bp).